The sequence spans 159 residues: Na(+)/H(+) antiporter subunit E1 (159 aa).

Helical transmembrane passes span M1 to S21, F27 to G47, F49 to I69, and W101 to V121.

Belongs to the CPA3 antiporters (TC 2.A.63) subunit E family. In terms of assembly, may form a heterooligomeric complex that consists of seven subunits: mnhA1, mnhB1, mnhC1, mnhD1, mnhE1, mnhF1 and mnhG1.

It localises to the cell membrane. Mnh complex is a Na(+)/H(+) antiporter involved in Na(+) excretion. This chain is Na(+)/H(+) antiporter subunit E1 (mnhE1), found in Staphylococcus aureus (strain bovine RF122 / ET3-1).